Reading from the N-terminus, the 211-residue chain is Transmembrane protein 247 (211 aa).

Basic and acidic residues-rich tracts occupy residues 1-10 (MAMEDREVME) and 31-45 (PEGK…EVPK). The disordered stretch occupies residues 1–90 (MAMEDREVME…AGDGPGLESV (90 aa)). Residues 63 to 73 (PGPPRSLPPKS) are compositionally biased toward pro residues. Residues 119–148 (KYLHQENERQRQHEEVMEQLQQQQQQQQAL) are a coiled coil. The next 2 helical transmembrane spans lie at 159–179 (LLLP…IHII) and 186–206 (VFFL…LCLI).

It localises to the membrane. In Mus musculus (Mouse), this protein is Transmembrane protein 247 (Tmem247).